The sequence spans 108 residues: UPF0060 membrane protein YnfA (108 aa).

The Periplasmic segment spans residues 1 to 5; sequence MIKTT. The chain crosses the membrane as a helical span at residues 6–26; the sequence is LLFFATALCEIIGCFLPWLWL. At 27–30 the chain is on the cytoplasmic side; the sequence is KRNA. The chain crosses the membrane as a helical span at residues 31–51; the sequence is SIWLLLPAGISLALFVWLLTL. Residues 52–60 lie on the Periplasmic side of the membrane; it reads HPAASGRVY. The helical transmembrane segment at 61–81 threads the bilayer; it reads AAYGGVYVCTALIWLRVVDGV. The Cytoplasmic segment spans residues 82–84; it reads KLT. The chain crosses the membrane as a helical span at residues 85 to 105; sequence LYDWTGALIALCGMLIIVAGW. Residues 106 to 108 lie on the Periplasmic side of the membrane; the sequence is GRT.

Belongs to the UPF0060 family.

The protein localises to the cell inner membrane. This Escherichia coli O127:H6 (strain E2348/69 / EPEC) protein is UPF0060 membrane protein YnfA.